The chain runs to 1195 residues: EST/SMG-like protein 2 (1195 aa).

3 stretches are compositionally biased toward polar residues: residues methionine 1 to leucine 10, threonine 18 to proline 35, and valine 55 to valine 68. Disordered regions lie at residues methionine 1–proline 38, valine 55–threonine 130, serine 179–asparagine 268, and aspartate 610–methionine 643. 2 stretches are compositionally biased toward basic and acidic residues: residues arginine 83–proline 109 and isoleucine 197–aspartate 208. 2 stretches are compositionally biased toward low complexity: residues asparagine 210 to aspartate 252 and asparagine 619 to threonine 629. A PINc domain is found at threonine 1025–lysine 1164.

Transiently interacts with PEX14.

Its subcellular location is the cytoplasm. It localises to the nucleus. The protein localises to the peroxisome. Its function is as follows. May be involved in the regulation of gene expression responses of environment-sensing pathways. This Saccharomyces cerevisiae (strain ATCC 204508 / S288c) (Baker's yeast) protein is EST/SMG-like protein 2.